Reading from the N-terminus, the 363-residue chain is Serpentine receptor class beta-17 (363 aa).

7 helical membrane-spanning segments follow: residues 46–66 (AFLL…GSII), 75–95 (LLAF…SCFL), 120–140 (VILA…SMLC), 169–189 (IGFV…LYMY), 214–234 (YIFI…IGLY), 273–293 (CAQL…RIFL), and 304–324 (VTEF…ICIV).

Belongs to the nematode receptor-like protein srb family.

Its subcellular location is the membrane. This is Serpentine receptor class beta-17 (srb-17) from Caenorhabditis elegans.